The chain runs to 77 residues: Acyl carrier protein (77 aa).

Positions 1–76 (MAIFDDVKKV…DVVNYIENLQ (76 aa)) constitute a Carrier domain. At S36 the chain carries O-(pantetheine 4'-phosphoryl)serine.

This sequence belongs to the acyl carrier protein (ACP) family. 4'-phosphopantetheine is transferred from CoA to a specific serine of apo-ACP by AcpS. This modification is essential for activity because fatty acids are bound in thioester linkage to the sulfhydryl of the prosthetic group.

It is found in the cytoplasm. The protein operates within lipid metabolism; fatty acid biosynthesis. Carrier of the growing fatty acid chain in fatty acid biosynthesis. The chain is Acyl carrier protein from Campylobacter lari (strain RM2100 / D67 / ATCC BAA-1060).